Consider the following 196-residue polypeptide: Probable malonic semialdehyde reductase RutE (196 aa).

It belongs to the nitroreductase family. HadB/RutE subfamily. FMN serves as cofactor.

The catalysed reaction is 3-hydroxypropanoate + NADP(+) = 3-oxopropanoate + NADPH + H(+). May reduce toxic product malonic semialdehyde to 3-hydroxypropionic acid, which is excreted. The sequence is that of Probable malonic semialdehyde reductase RutE from Klebsiella pneumoniae subsp. pneumoniae (strain ATCC 700721 / MGH 78578).